Reading from the N-terminus, the 315-residue chain is CID domain-containing protein 1 (315 aa).

In terms of domain architecture, CID spans 1 to 135; sequence MADFTEQTLR…RLHEVHQQVK (135 aa). Positions 227-273 form a coiled coil; that stretch reads MLEEYVKRLKNETNERETLESNLNMLIENVRMSIEHHEKLCREVKRR.

This is CID domain-containing protein 1 (cids-1) from Caenorhabditis elegans.